A 1221-amino-acid chain; its full sequence is DNA-directed RNA polymerase subunit beta' (1221 aa).

Residues Cys-60, Cys-62, Cys-75, and Cys-78 each coordinate Zn(2+). Mg(2+) is bound by residues Asp-449, Asp-451, and Asp-453. The Zn(2+) site is built by Cys-821, Cys-896, Cys-903, and Cys-906.

This sequence belongs to the RNA polymerase beta' chain family. As to quaternary structure, the RNAP catalytic core consists of 2 alpha, 1 beta, 1 beta' and 1 omega subunit. When a sigma factor is associated with the core the holoenzyme is formed, which can initiate transcription. Mg(2+) serves as cofactor. It depends on Zn(2+) as a cofactor.

It carries out the reaction RNA(n) + a ribonucleoside 5'-triphosphate = RNA(n+1) + diphosphate. Its function is as follows. DNA-dependent RNA polymerase catalyzes the transcription of DNA into RNA using the four ribonucleoside triphosphates as substrates. The protein is DNA-directed RNA polymerase subunit beta' of Lactobacillus delbrueckii subsp. bulgaricus (strain ATCC 11842 / DSM 20081 / BCRC 10696 / JCM 1002 / NBRC 13953 / NCIMB 11778 / NCTC 12712 / WDCM 00102 / Lb 14).